The primary structure comprises 60 residues: MAVPARHTSKAKKNKRRTHYKLTAPSVQFDETTGDFSRSHRVSLKGYYKGRKIAKANEAK.

Positions 1 to 21 (MAVPARHTSKAKKNKRRTHYK) are disordered. Basic residues predominate over residues 7 to 20 (HTSKAKKNKRRTHY).

The protein belongs to the bacterial ribosomal protein bL32 family.

The chain is Large ribosomal subunit protein bL32 from Streptococcus uberis (strain ATCC BAA-854 / 0140J).